The following is a 607-amino-acid chain: UvrABC system protein C (607 aa).

Residues 16–94 (GRPGVYRMFD…IKEWRPPYNI (79 aa)) form the GIY-YIG domain. Residues 203–238 (NALTDELSAGMEQAASTLDFEKAAELRDQISLLRRV) form the UVR domain.

It belongs to the UvrC family. As to quaternary structure, interacts with UvrB in an incision complex.

It is found in the cytoplasm. Its function is as follows. The UvrABC repair system catalyzes the recognition and processing of DNA lesions. UvrC both incises the 5' and 3' sides of the lesion. The N-terminal half is responsible for the 3' incision and the C-terminal half is responsible for the 5' incision. The sequence is that of UvrABC system protein C from Pseudomonas protegens (strain DSM 19095 / LMG 27888 / CFBP 6595 / CHA0).